Here is a 764-residue protein sequence, read N- to C-terminus: Irregular chiasm C-roughest protein (764 aa).

Positions 1–19 (MLHTMQLLLLATIVGMVRS) are cleaved as a signal peptide. Residues 20 to 533 (SPYTSYQNQR…QAKKSVSLLM (514 aa)) lie on the Extracellular side of the membrane. 5 Ig-like C2-type domains span residues 21 to 120 (PYTS…PAIR), 132 to 230 (PEAP…AKIR), 237 to 343 (PKVK…LDIS), 346 to 419 (PSFR…AEIS), and 430 to 530 (PAIG…KSVS). Disulfide bonds link C49/C107, C155/C214, C281/C325, C367/C408, and C450/C508. N211, N313, N393, N400, and N507 each carry an N-linked (GlcNAc...) asparagine glycan. A helical transmembrane segment spans residues 534–556 (TIVGGISVVAFLLVLTILVVVYI). At 557–764 (KCKKRTKLPP…SSLLPPPTAV (208 aa)) the chain is on the cytoplasmic side. 2 disordered regions span residues 640–660 (HQNQLQLQQQQQQSHHQHHTQ) and 691–719 (NGLPSLQSTTASVVSSSPNGSCSNQSTTA). Residues 692–701 (GLPSLQSTTA) show a composition bias toward polar residues. A compositionally biased stretch (low complexity) spans 702-719 (SVVSSSPNGSCSNQSTTA).

In terms of tissue distribution, postembryonic expression is strong in the developing optic lobe and in the eye imaginal disk.

The protein localises to the membrane. In terms of biological role, required for correct axonal pathway formation in the optic lobe and for programmed cell death in the developing retina. This chain is Irregular chiasm C-roughest protein (rst), found in Drosophila melanogaster (Fruit fly).